The chain runs to 99 residues: Aspartyl/glutamyl-tRNA(Asn/Gln) amidotransferase subunit C (99 aa).

This sequence belongs to the GatC family. As to quaternary structure, heterotrimer of A, B and C subunits.

It catalyses the reaction L-glutamyl-tRNA(Gln) + L-glutamine + ATP + H2O = L-glutaminyl-tRNA(Gln) + L-glutamate + ADP + phosphate + H(+). It carries out the reaction L-aspartyl-tRNA(Asn) + L-glutamine + ATP + H2O = L-asparaginyl-tRNA(Asn) + L-glutamate + ADP + phosphate + 2 H(+). Functionally, allows the formation of correctly charged Asn-tRNA(Asn) or Gln-tRNA(Gln) through the transamidation of misacylated Asp-tRNA(Asn) or Glu-tRNA(Gln) in organisms which lack either or both of asparaginyl-tRNA or glutaminyl-tRNA synthetases. The reaction takes place in the presence of glutamine and ATP through an activated phospho-Asp-tRNA(Asn) or phospho-Glu-tRNA(Gln). The protein is Aspartyl/glutamyl-tRNA(Asn/Gln) amidotransferase subunit C of Paraburkholderia phytofirmans (strain DSM 17436 / LMG 22146 / PsJN) (Burkholderia phytofirmans).